The primary structure comprises 421 residues: UDP-N-acetylglucosamine 1-carboxyvinyltransferase (421 aa).

22 to 23 (KN) provides a ligand contact to phosphoenolpyruvate. Arginine 93 serves as a coordination point for UDP-N-acetyl-alpha-D-glucosamine. Cysteine 117 functions as the Proton donor in the catalytic mechanism. Residue cysteine 117 is modified to 2-(S-cysteinyl)pyruvic acid O-phosphothioketal. Residues 122 to 126 (RPVDL), aspartate 308, and isoleucine 330 each bind UDP-N-acetyl-alpha-D-glucosamine.

This sequence belongs to the EPSP synthase family. MurA subfamily.

It localises to the cytoplasm. The enzyme catalyses phosphoenolpyruvate + UDP-N-acetyl-alpha-D-glucosamine = UDP-N-acetyl-3-O-(1-carboxyvinyl)-alpha-D-glucosamine + phosphate. It functions in the pathway cell wall biogenesis; peptidoglycan biosynthesis. In terms of biological role, cell wall formation. Adds enolpyruvyl to UDP-N-acetylglucosamine. The sequence is that of UDP-N-acetylglucosamine 1-carboxyvinyltransferase from Pseudomonas putida (strain ATCC 700007 / DSM 6899 / JCM 31910 / BCRC 17059 / LMG 24140 / F1).